Reading from the N-terminus, the 197-residue chain is Cell division protein SepF (197 aa).

Disordered stretches follow at residues 38-72 (MPTP…TTPT) and 164-197 (LSRE…AQAQ). A compositionally biased stretch (polar residues) spans 58–72 (TVASNFAMNSNTTPT). A compositionally biased stretch (low complexity) spans 170–185 (PATPAAPARPAAPAPA).

It belongs to the SepF family. In terms of assembly, homodimer. Interacts with FtsZ.

Its subcellular location is the cytoplasm. In terms of biological role, cell division protein that is part of the divisome complex and is recruited early to the Z-ring. Probably stimulates Z-ring formation, perhaps through the cross-linking of FtsZ protofilaments. Its function overlaps with FtsA. The polypeptide is Cell division protein SepF (Picosynechococcus sp. (strain ATCC 27264 / PCC 7002 / PR-6) (Agmenellum quadruplicatum)).